The sequence spans 157 residues: Snaclec 3 (157 aa).

A signal peptide spans 1 to 23; that stretch reads MGRLIFLSFGWLVVFLSLSGTGA. Intrachain disulfides connect cysteine 27–cysteine 38, cysteine 55–cysteine 153, and cysteine 128–cysteine 145. In terms of domain architecture, C-type lectin spans 34-154; the sequence is YGQHCYRAFS…CAGHYPFICK (121 aa).

This sequence belongs to the snaclec family. In terms of assembly, heterodimer; disulfide-linked. Expressed by the venom gland.

Its subcellular location is the secreted. Interferes with one step of hemostasis (modulation of platelet aggregation, or coagulation cascade, for example). The sequence is that of Snaclec 3 from Bitis gabonica (Gaboon adder).